The primary structure comprises 268 residues: 4-hydroxy-tetrahydrodipicolinate reductase (268 aa).

NAD(+) contacts are provided by residues 7 to 12 (GAGGRM) and Glu-33. NADP(+) is bound at residue Arg-34. Residues 97-99 (GTT) and 121-124 (SGNM) each bind NAD(+). His-155 functions as the Proton donor/acceptor in the catalytic mechanism. A (S)-2,3,4,5-tetrahydrodipicolinate-binding site is contributed by His-156. The Proton donor role is filled by Lys-159. 165 to 166 (GT) lines the (S)-2,3,4,5-tetrahydrodipicolinate pocket.

It belongs to the DapB family.

The protein resides in the cytoplasm. The enzyme catalyses (S)-2,3,4,5-tetrahydrodipicolinate + NAD(+) + H2O = (2S,4S)-4-hydroxy-2,3,4,5-tetrahydrodipicolinate + NADH + H(+). It carries out the reaction (S)-2,3,4,5-tetrahydrodipicolinate + NADP(+) + H2O = (2S,4S)-4-hydroxy-2,3,4,5-tetrahydrodipicolinate + NADPH + H(+). It functions in the pathway amino-acid biosynthesis; L-lysine biosynthesis via DAP pathway; (S)-tetrahydrodipicolinate from L-aspartate: step 4/4. Functionally, catalyzes the conversion of 4-hydroxy-tetrahydrodipicolinate (HTPA) to tetrahydrodipicolinate. This Brucella melitensis biotype 1 (strain ATCC 23456 / CCUG 17765 / NCTC 10094 / 16M) protein is 4-hydroxy-tetrahydrodipicolinate reductase.